We begin with the raw amino-acid sequence, 320 residues long: Beta-carotene 3-hydroxylase, chloroplastic (320 aa).

Residues 1–78 constitute a chloroplast transit peptide; it reads METQFLVSGR…EKELRGKLVV (78 aa). The next 2 membrane-spanning stretches (helical) occupy residues 118–138 and 152–172; these read YLVA…LSVY and LSEM…MEFW. Positions 165–292 constitute a Fatty acid hydroxylase domain; the sequence is AAVGMEFWAR…KFNGVPYGLF (128 aa). The Histidine box-1 signature appears at 177–182; the sequence is HEALWH. Positions 189–193 match the Histidine box-2 motif; the sequence is HESHH. Transmembrane regions (helical) follow at residues 204–224 and 228–248; these read DIFA…GFFH and IPGL…AYMF. Residues 250-255 carry the Histidine box-3 motif; the sequence is HDGLVH. The short motif at 276–280 is the Histidine box-4 element; that stretch reads HTLHH.

The protein belongs to the sterol desaturase family.

The protein localises to the plastid. The protein resides in the chloroplast membrane. It carries out the reaction all-trans-beta-carotene + 4 reduced [2Fe-2S]-[ferredoxin] + 2 O2 + 4 H(+) = all-trans-zeaxanthin + 4 oxidized [2Fe-2S]-[ferredoxin] + 2 H2O. In terms of biological role, nonheme diiron monooxygenase involved in the biosynthesis of xanthophylls. Specific for beta-ring hydroxylations of beta-carotene. Uses ferredoxin as an electron donor. The sequence is that of Beta-carotene 3-hydroxylase, chloroplastic (BHY) from Gentiana lutea (Yellow gentian).